A 196-amino-acid polypeptide reads, in one-letter code: Probable nicotinate-nucleotide adenylyltransferase (196 aa).

The protein belongs to the NadD family.

It catalyses the reaction nicotinate beta-D-ribonucleotide + ATP + H(+) = deamido-NAD(+) + diphosphate. Its pathway is cofactor biosynthesis; NAD(+) biosynthesis; deamido-NAD(+) from nicotinate D-ribonucleotide: step 1/1. Its function is as follows. Catalyzes the reversible adenylation of nicotinate mononucleotide (NaMN) to nicotinic acid adenine dinucleotide (NaAD). The protein is Probable nicotinate-nucleotide adenylyltransferase of Thermotoga petrophila (strain ATCC BAA-488 / DSM 13995 / JCM 10881 / RKU-1).